The sequence spans 399 residues: Elongation factor Tu (399 aa).

A tr-type G domain is found at 10 to 204 (KPHVNIGTIG…AVDEAIPEPE (195 aa)). The G1 stretch occupies residues 19–26 (GHVDHGKT). 19–26 (GHVDHGKT) lines the GTP pocket. Thr-26 provides a ligand contact to Mg(2+). Residues 60–64 (GITIN) form a G2 region. The tract at residues 81–84 (DCPG) is G3. Residues 81-85 (DCPGH) and 136-139 (NKCD) each bind GTP. The tract at residues 136 to 139 (NKCD) is G4. The G5 stretch occupies residues 174-176 (SGL).

This sequence belongs to the TRAFAC class translation factor GTPase superfamily. Classic translation factor GTPase family. EF-Tu/EF-1A subfamily. In terms of assembly, monomer.

The protein localises to the cytoplasm. It catalyses the reaction GTP + H2O = GDP + phosphate + H(+). GTP hydrolase that promotes the GTP-dependent binding of aminoacyl-tRNA to the A-site of ribosomes during protein biosynthesis. The protein is Elongation factor Tu of Parasynechococcus marenigrum (strain WH8102).